A 411-amino-acid chain; its full sequence is MADVVVGIQWGDEGKGKIVDRIAKDYDFVVRYQGGHNAGHTIVHKGVKHSLHLMPSGVLYSQCKNIISSAVVVSVKDLCEEISMFENLENRLFVSDRAHVILPYHVQKDAFKEKSQNIGTTKKGIGPCYEDKMARSGIRMGDLLDDRILEEKLKVHFKAIEPFKEAYDLNETYEKDLREYFEQYAPKIRPFIKDTTSMLIEANQKGEKILLEGAQGTLLDIDLGTYPFVTSSNTTSASACVSTGLNPKAINEIIGITKAYSTRVGNGPFPSEDTTPMGDHLRIGGAEFGTTTKRPRRCGWLDLVALKYACALNGCTQLALMKLDVLDGINEIKVCVAYERRGEKLETFPSDLKDCVPIYQTFKGWEKSVGVRKLDDLEQNTREYIRFIEEEVGVKIRLISTSPEREDTIFL.

GTP contacts are provided by residues 11–17 and 39–41; these read GDEGKGK and GHT. Aspartate 12 functions as the Proton acceptor in the catalytic mechanism. Mg(2+)-binding residues include aspartate 12 and glycine 39. IMP contacts are provided by residues 12–15, 37–40, threonine 121, arginine 135, glutamine 215, threonine 230, and arginine 294; these read DEGK and NAGH. Histidine 40 serves as the catalytic Proton donor. Residue 290 to 296 coordinates substrate; sequence TTTKRPR. GTP contacts are provided by residues arginine 296, 322 to 324, and 400 to 402; these read KLD and STS.

Belongs to the adenylosuccinate synthetase family. As to quaternary structure, homodimer. It depends on Mg(2+) as a cofactor.

It is found in the cytoplasm. It carries out the reaction IMP + L-aspartate + GTP = N(6)-(1,2-dicarboxyethyl)-AMP + GDP + phosphate + 2 H(+). Its pathway is purine metabolism; AMP biosynthesis via de novo pathway; AMP from IMP: step 1/2. Functionally, plays an important role in the de novo pathway of purine nucleotide biosynthesis. Catalyzes the first committed step in the biosynthesis of AMP from IMP. The chain is Adenylosuccinate synthetase from Helicobacter acinonychis (strain Sheeba).